Reading from the N-terminus, the 156-residue chain is Small ribosomal subunit protein uS7 (156 aa).

This sequence belongs to the universal ribosomal protein uS7 family. As to quaternary structure, part of the 30S ribosomal subunit. Contacts proteins S9 and S11.

Functionally, one of the primary rRNA binding proteins, it binds directly to 16S rRNA where it nucleates assembly of the head domain of the 30S subunit. Is located at the subunit interface close to the decoding center, probably blocks exit of the E-site tRNA. This chain is Small ribosomal subunit protein uS7, found in Pediococcus pentosaceus (strain ATCC 25745 / CCUG 21536 / LMG 10740 / 183-1w).